The sequence spans 533 residues: Undecaprenyl phosphate-alpha-4-amino-4-deoxy-L-arabinose arabinosyl transferase (533 aa).

Transmembrane regions (helical) follow at residues 10-30 (LLLA…GLWI), 64-84 (PAGY…LFGV), 86-106 (IASA…AGKI), 113-133 (SFAS…AGYS), 137-157 (PQFT…VHSI), 170-190 (VACG…PAII), 207-227 (FGPL…LAVH), 257-277 (WWFY…LLPV), 290-310 (DTAF…LSKG), 312-332 (LPTY…DALV), 345-365 (VNGI…IYVQ), 377-397 (HLLL…LQGI), and 402-422 (FWAL…AALP).

The protein belongs to the glycosyltransferase 83 family.

Its subcellular location is the cell inner membrane. The catalysed reaction is 4-amino-4-deoxy-alpha-L-arabinopyranosyl di-trans,octa-cis-undecaprenyl phosphate + lipid IVA = lipid IIA + di-trans,octa-cis-undecaprenyl phosphate.. The protein operates within lipopolysaccharide metabolism; 4-amino-4-deoxy-beta-L-arabinose-lipid A biosynthesis. Catalyzes the transfer of the L-Ara4N moiety of the glycolipid undecaprenyl phosphate-alpha-L-Ara4N to lipid A. The modified arabinose is attached to lipid A and is required for resistance to polymyxin and cationic antimicrobial peptides. The chain is Undecaprenyl phosphate-alpha-4-amino-4-deoxy-L-arabinose arabinosyl transferase from Pseudomonas savastanoi pv. phaseolicola (strain 1448A / Race 6) (Pseudomonas syringae pv. phaseolicola (strain 1448A / Race 6)).